Here is a 183-residue protein sequence, read N- to C-terminus: MADAAPAGDAPPNAGAPAGEGGDGEIVGGPHNPQQIAAQKRLQQTQAQVDEVVDIMRTNVEKVLERDSKLSELDDRADALQQGASQFEQQAGKLKRKFWLQNLKMMIIMGVIGLVVVGIIANKLGLIGGEQPPQYQYPPQYMQPPPPPPQQPAGGQSSLVDAAGAGDGAGAGGSAGAGDHGGV.

The segment covering 1-17 has biased composition (low complexity); it reads MADAAPAGDAPPNAGAP. Positions 1–32 are disordered; it reads MADAAPAGDAPPNAGAPAGEGGDGEIVGGPHN. Residues 1–106 are Cytoplasmic-facing; the sequence is MADAAPAGDA…KFWLQNLKMM (106 aa). Over residues 18–27 the composition is skewed to gly residues; sequence AGEGGDGEIV. One can recognise a v-SNARE coiled-coil homology domain in the interval 41 to 101; it reads RLQQTQAQVD…GKLKRKFWLQ (61 aa). Residues 107–127 traverse the membrane as a helical segment; it reads IIMGVIGLVVVGIIANKLGLI. Residues 128–183 are Vesicular-facing; the sequence is GGEQPPQYQYPPQYMQPPPPPPQQPAGGQSSLVDAAGAGDGAGAGGSAGAGDHGGV. The interval 135 to 183 is disordered; it reads YQYPPQYMQPPPPPPQQPAGGQSSLVDAAGAGDGAGAGGSAGAGDHGGV. The span at 141–151 shows a compositional bias: pro residues; that stretch reads YMQPPPPPPQQ. The span at 165–183 shows a compositional bias: gly residues; it reads AGDGAGAGGSAGAGDHGGV.

The protein belongs to the synaptobrevin family. In terms of assembly, part of the SNARE core complex containing Snap25 and syntaxin. In terms of tissue distribution, specifically expressed in neurons and synapses.

Its subcellular location is the cytoplasmic vesicle. It is found in the secretory vesicle. The protein resides in the synaptic vesicle membrane. The protein localises to the early endosome membrane. Its function is as follows. Involved in the targeting and/or fusion of transport vesicles to their target membrane. Major SNARE protein of synaptic vesicles which mediates fusion of synaptic vesicles to release neurotransmitters. Essential for fast vesicular exocytosis and activity-dependent neurotransmitter release as well as fast endocytosis that mediates rapid reuse of synaptic vesicles. Also involved in a neuron-specific sort-and-degrade mechanism that promotes endolysosomal degradation and is required for neuronal maintenance. The polypeptide is Neuronal synaptobrevin (Drosophila melanogaster (Fruit fly)).